A 214-amino-acid polypeptide reads, in one-letter code: Hypoxanthine-guanine phosphoribosyltransferase (214 aa).

Alanine 2 carries the post-translational modification N-acetylalanine. Lysine 69 provides a ligand contact to GMP. Lysine 103 carries the N6-acetyllysine modification. Lysine 115 is covalently cross-linked (Glycyl lysine isopeptide (Lys-Gly) (interchain with G-Cter in SUMO1); alternate). A Glycyl lysine isopeptide (Lys-Gly) (interchain with G-Cter in SUMO2); alternate cross-link involves residue lysine 115. GMP-binding positions include 134–142, lysine 166, 186–188, and aspartate 194; these read EDIIDTGKT and KFV. Aspartate 138 (proton acceptor) is an active-site residue. The residue at position 142 (threonine 142) is a Phosphothreonine. A Mg(2+)-binding site is contributed by aspartate 194.

Belongs to the purine/pyrimidine phosphoribosyltransferase family. In terms of assembly, homotetramer. Mg(2+) is required as a cofactor.

The protein localises to the cytoplasm. The catalysed reaction is IMP + diphosphate = hypoxanthine + 5-phospho-alpha-D-ribose 1-diphosphate. It carries out the reaction GMP + diphosphate = guanine + 5-phospho-alpha-D-ribose 1-diphosphate. It participates in purine metabolism; IMP biosynthesis via salvage pathway; IMP from hypoxanthine: step 1/1. Functionally, converts guanine to guanosine monophosphate, and hypoxanthine to inosine monophosphate. Transfers the 5-phosphoribosyl group from 5-phosphoribosylpyrophosphate onto the purine. Plays a central role in the generation of purine nucleotides through the purine salvage pathway. This Mus spretus (Western Mediterranean mouse) protein is Hypoxanthine-guanine phosphoribosyltransferase (Hprt1).